A 484-amino-acid chain; its full sequence is tRNA sulfurtransferase (484 aa).

Residues 63 to 167 (EAFGERLACI…NEQLYLVDKR (105 aa)) enclose the THUMP domain. ATP is bound by residues 185–186 (LI), Lys-267, Gly-289, and Gln-298. A disulfide bridge links Cys-346 with Cys-458. A Rhodanese domain is found at 406 to 484 (ISADEVIIDV…GYSNVKVYRP (79 aa)). The active-site Cysteine persulfide intermediate is Cys-458.

Belongs to the ThiI family.

The protein localises to the cytoplasm. It carries out the reaction [ThiI sulfur-carrier protein]-S-sulfanyl-L-cysteine + a uridine in tRNA + 2 reduced [2Fe-2S]-[ferredoxin] + ATP + H(+) = [ThiI sulfur-carrier protein]-L-cysteine + a 4-thiouridine in tRNA + 2 oxidized [2Fe-2S]-[ferredoxin] + AMP + diphosphate. It catalyses the reaction [ThiS sulfur-carrier protein]-C-terminal Gly-Gly-AMP + S-sulfanyl-L-cysteinyl-[cysteine desulfurase] + AH2 = [ThiS sulfur-carrier protein]-C-terminal-Gly-aminoethanethioate + L-cysteinyl-[cysteine desulfurase] + A + AMP + 2 H(+). It functions in the pathway cofactor biosynthesis; thiamine diphosphate biosynthesis. Its function is as follows. Catalyzes the ATP-dependent transfer of a sulfur to tRNA to produce 4-thiouridine in position 8 of tRNAs, which functions as a near-UV photosensor. Also catalyzes the transfer of sulfur to the sulfur carrier protein ThiS, forming ThiS-thiocarboxylate. This is a step in the synthesis of thiazole, in the thiamine biosynthesis pathway. The sulfur is donated as persulfide by IscS. This Shewanella piezotolerans (strain WP3 / JCM 13877) protein is tRNA sulfurtransferase.